The primary structure comprises 96 residues: Putative septation protein SpoVG (96 aa).

Belongs to the SpoVG family.

Could be involved in septation. This chain is Putative septation protein SpoVG, found in Borrelia hermsii (strain HS1 / DAH).